The following is a 366-amino-acid chain: Alanine racemase (366 aa).

The Proton acceptor; specific for D-alanine role is filled by lysine 33. Lysine 33 carries the post-translational modification N6-(pyridoxal phosphate)lysine. Substrate is bound at residue arginine 129. The Proton acceptor; specific for L-alanine role is filled by tyrosine 253. Position 301 (methionine 301) interacts with substrate.

It belongs to the alanine racemase family. Pyridoxal 5'-phosphate is required as a cofactor.

The catalysed reaction is L-alanine = D-alanine. It functions in the pathway amino-acid biosynthesis; D-alanine biosynthesis; D-alanine from L-alanine: step 1/1. Its function is as follows. Catalyzes the interconversion of L-alanine and D-alanine. May also act on other amino acids. The polypeptide is Alanine racemase (alr) (Xanthomonas axonopodis pv. citri (strain 306)).